The sequence spans 224 residues: N-terminal Xaa-Pro-Lys N-methyltransferase 1-A (224 aa).

S-adenosyl-L-methionine contacts are provided by residues glycine 70, arginine 75, 92–94, 120–121, and glutamine 136; these read DVT and LQ.

Belongs to the methyltransferase superfamily. NTM1 family.

The protein resides in the nucleus. The catalysed reaction is N-terminal L-alanyl-L-prolyl-L-lysyl-[protein] + 3 S-adenosyl-L-methionine = N-terminal N,N,N-trimethyl-L-alanyl-L-prolyl-L-lysyl-[protein] + 3 S-adenosyl-L-homocysteine + 3 H(+). It carries out the reaction N-terminal L-seryl-L-prolyl-L-lysyl-[protein] + 3 S-adenosyl-L-methionine = N-terminal N,N,N-trimethyl-L-seryl-L-prolyl-L-lysyl-[protein] + 3 S-adenosyl-L-homocysteine + 3 H(+). It catalyses the reaction N-terminal L-prolyl-L-prolyl-L-lysyl-[protein] + 2 S-adenosyl-L-methionine = N-terminal N,N-dimethyl-L-prolyl-L-prolyl-L-lysyl-[protein] + 2 S-adenosyl-L-homocysteine + 2 H(+). In terms of biological role, distributive alpha-N-methyltransferase that methylates the N-terminus of target proteins containing the N-terminal motif [Ala/Gly/Pro/Ser]-Pro-Lys when the initiator Met is cleaved. Specifically catalyzes mono-, di- or tri-methylation of the exposed alpha-amino group of the Ala, Gly or Ser residue in the [Ala/Gly/Ser]-Pro-Lys motif and mono- or di-methylation of Pro in the Pro-Pro-Lys motif. Required during mitosis for normal bipolar spindle formation and chromosome segregation via its action on target proteins. The sequence is that of N-terminal Xaa-Pro-Lys N-methyltransferase 1-A (ntmt1-a) from Xenopus laevis (African clawed frog).